The following is a 41-amino-acid chain: Large ribosomal subunit protein bL36 (41 aa).

This sequence belongs to the bacterial ribosomal protein bL36 family.

The sequence is that of Large ribosomal subunit protein bL36 from Xanthobacter autotrophicus (strain ATCC BAA-1158 / Py2).